The primary structure comprises 312 residues: CD-NTase-associated protein 12 (312 aa).

The TIR domain occupies 5–127 (RLFIGSSSEE…FNGLTLARFD (123 aa)).

It in the C-terminal section; belongs to the bacterial STING family. Forms homodimers; in the presence of c-di-GMP forms filaments with an ordered array of parallel-stacked subunits.

The enzyme catalyses NAD(+) + H2O = ADP-D-ribose + nicotinamide + H(+). NAD(+) hydrolase activity is strongly stimulated by c-di-GMP, weakly by 3'3'-cGAMP, very weakly by c-di-AMP but not at all by 2'3'-cGAMP. Self-association of TIR domains is required for NADase activity. In terms of biological role, effector protein of a CBASS antiviral system with NAD(+) hydrolase activity. CBASS (cyclic oligonucleotide-based antiphage signaling system) provides immunity against bacteriophage. The CD-NTase protein synthesizes cyclic nucleotides in response to infection; these serve as specific second messenger signals. The signals activate a diverse range of effectors, leading to bacterial cell death and thus abortive phage infection. A type I-D CBASS(GG) system. Functionally, binds c-di-GMP, does not bind cUMP-AMP. Upon activation by c-di-GMP forms filaments which hydrolyze NAD(+); filament formation is required for enzyme activation. The sequence is that of CD-NTase-associated protein 12 from Niabella drilacis (strain DSM 25811 / CCM 8410 / CCUG 62505 / LMG 26954 / E90).